The primary structure comprises 1550 residues: Protein TIME FOR COFFEE (1550 aa).

10 disordered regions span residues 1-191 (MDRN…PVSP), 207-304 (VPRK…PVAV), 325-505 (TSKQ…SERG), 708-736 (QGSV…TAQR), 779-805 (RPPN…SATP), 859-1023 (FNGS…KAGV), 1086-1130 (ASLE…QSIA), 1163-1196 (ALPQ…SQQP), 1213-1296 (AASA…SVAA), and 1321-1435 (NSKP…PKHG). A compositionally biased stretch (basic and acidic residues) spans 43 to 80 (EAARLRDRGGSNKKDRDRERDRDRERERERDRERDRLN). Positions 100–118 (DGGDDSSEESVNDDEEYDD) are enriched in acidic residues. Low complexity predominate over residues 134-151 (SNNISAASFSSSLSNHHN). Residues 157-171 (LHHHHHSHNNNHQRK) show a composition bias toward basic residues. The segment covering 241–250 (RQISSTSPAN) has biased composition (polar residues). Low complexity predominate over residues 292–301 (KSSSSKLSSP). The span at 348 to 366 (RVSSPISNPQTLPQSSITL) shows a compositional bias: polar residues. Over residues 367–379 (AANSSSSNVSAIA) the composition is skewed to low complexity. The segment covering 409 to 432 (SKSQVPFSNQLKSSGSGEGNSSVL) has biased composition (polar residues). Basic and acidic residues-rich tracts occupy residues 447–461 (DSEK…DETI) and 473–490 (SDGE…KFEI). 3 stretches are compositionally biased toward polar residues: residues 713–736 (GRSS…TAQR), 783–803 (SGIT…SASA), and 884–992 (LTGQ…NLGL). Positions 1112–1126 (SGGGAIGKTSGGNGG) are enriched in gly residues. Residues 1164-1173 (LPQSSGSLPT) show a composition bias toward polar residues. The span at 1174–1195 (SHHQQLLQQQQQQHMQRSQSQQ) shows a compositional bias: low complexity. Residues 1234 to 1253 (NMTTSPAGTTKFANANSGFP) are compositionally biased toward polar residues. Low complexity predominate over residues 1254-1273 (QNLVQSSSNQVQSQQWKNNS). Polar residues-rich tracts occupy residues 1274–1296 (PRTT…SVAA), 1321–1342 (NSKP…NHQA), and 1351–1360 (SPSTSSVSKN). Positions 1361 to 1382 (ASGSPRTTASASSAANKGGQAS) are enriched in low complexity. Composition is skewed to polar residues over residues 1383–1397 (TTTH…NLQP) and 1405–1419 (GGRN…NPTT). A compositionally biased stretch (low complexity) spans 1420–1435 (SSGSKSQQQQQLPKHG).

In terms of assembly, interacts with MYC2.

It localises to the nucleus. Its function is as follows. Regulator of normal clock function. Acts in the mid to late night. Contributes to the amplitude of circadian clocks. May act on the transcriptional induction of LATE ELONGATED HYPOCOTYL (LHY). Inhibits MYC2 protein accumulation, acting as a negative factor in the JA-signaling pathway. The chain is Protein TIME FOR COFFEE (TIC) from Arabidopsis thaliana (Mouse-ear cress).